Consider the following 379-residue polypeptide: Queuine tRNA-ribosyltransferase (379 aa).

The active-site Proton acceptor is aspartate 94. Residues 94 to 98, aspartate 148, glutamine 191, and glycine 218 each bind substrate; that span reads DSGGF. The interval 249–255 is RNA binding; the sequence is GVGSPDS. The Nucleophile role is filled by aspartate 268. Residues 273-277 are RNA binding; important for wobble base 34 recognition; it reads TRIAR. Positions 306, 308, 311, and 337 each coordinate Zn(2+).

This sequence belongs to the queuine tRNA-ribosyltransferase family. As to quaternary structure, homodimer. Within each dimer, one monomer is responsible for RNA recognition and catalysis, while the other monomer binds to the replacement base PreQ1. Requires Zn(2+) as cofactor.

The enzyme catalyses 7-aminomethyl-7-carbaguanine + guanosine(34) in tRNA = 7-aminomethyl-7-carbaguanosine(34) in tRNA + guanine. It participates in tRNA modification; tRNA-queuosine biosynthesis. Functionally, catalyzes the base-exchange of a guanine (G) residue with the queuine precursor 7-aminomethyl-7-deazaguanine (PreQ1) at position 34 (anticodon wobble position) in tRNAs with GU(N) anticodons (tRNA-Asp, -Asn, -His and -Tyr). Catalysis occurs through a double-displacement mechanism. The nucleophile active site attacks the C1' of nucleotide 34 to detach the guanine base from the RNA, forming a covalent enzyme-RNA intermediate. The proton acceptor active site deprotonates the incoming PreQ1, allowing a nucleophilic attack on the C1' of the ribose to form the product. After dissociation, two additional enzymatic reactions on the tRNA convert PreQ1 to queuine (Q), resulting in the hypermodified nucleoside queuosine (7-(((4,5-cis-dihydroxy-2-cyclopenten-1-yl)amino)methyl)-7-deazaguanosine). The polypeptide is Queuine tRNA-ribosyltransferase (Halalkalibacterium halodurans (strain ATCC BAA-125 / DSM 18197 / FERM 7344 / JCM 9153 / C-125) (Bacillus halodurans)).